Here is a 513-residue protein sequence, read N- to C-terminus: ATP synthase subunit alpha (513 aa).

Glycine 169–threonine 176 contributes to the ATP binding site.

It belongs to the ATPase alpha/beta chains family. F-type ATPases have 2 components, CF(1) - the catalytic core - and CF(0) - the membrane proton channel. CF(1) has five subunits: alpha(3), beta(3), gamma(1), delta(1), epsilon(1). CF(0) has three main subunits: a(1), b(2) and c(9-12). The alpha and beta chains form an alternating ring which encloses part of the gamma chain. CF(1) is attached to CF(0) by a central stalk formed by the gamma and epsilon chains, while a peripheral stalk is formed by the delta and b chains.

The protein localises to the cell inner membrane. It catalyses the reaction ATP + H2O + 4 H(+)(in) = ADP + phosphate + 5 H(+)(out). Functionally, produces ATP from ADP in the presence of a proton gradient across the membrane. The alpha chain is a regulatory subunit. This is ATP synthase subunit alpha from Cupriavidus pinatubonensis (strain JMP 134 / LMG 1197) (Cupriavidus necator (strain JMP 134)).